The sequence spans 176 residues: Peptide deformylase 2 (176 aa).

Residues C99 and H141 each coordinate Fe cation. E142 is an active-site residue. Residue H145 coordinates Fe cation.

It belongs to the polypeptide deformylase family. Fe(2+) serves as cofactor.

It carries out the reaction N-terminal N-formyl-L-methionyl-[peptide] + H2O = N-terminal L-methionyl-[peptide] + formate. In terms of biological role, removes the formyl group from the N-terminal Met of newly synthesized proteins. Requires at least a dipeptide for an efficient rate of reaction. N-terminal L-methionine is a prerequisite for activity but the enzyme has broad specificity at other positions. The chain is Peptide deformylase 2 from Bordetella bronchiseptica (strain ATCC BAA-588 / NCTC 13252 / RB50) (Alcaligenes bronchisepticus).